The following is a 194-amino-acid chain: CASP-like protein 2D1 (194 aa).

Residues 1-16 are compositionally biased toward basic and acidic residues; it reads MRDNNNNNTREEERSS. Residues 1–26 form a disordered region; sequence MRDNNNNNTREEERSSSSKQQQPQAP. Residues 1-30 lie on the Cytoplasmic side of the membrane; that stretch reads MRDNNNNNTREEERSSSSKQQQPQAPMSLK. The helical transmembrane segment at 31–51 threads the bilayer; it reads IIDSCLRLSVVPLSVATIWLT. Over 52–74 the chain is Extracellular; sequence VTNHESNPDYGNLEYNSIMGLKY. A helical membrane pass occupies residues 75–95; sequence MVGVSAISAIYALLSTVSSWV. Topologically, residues 96 to 110 are cytoplasmic; that stretch reads TCLVSKAWLFFIPDQ. Residues 111 to 133 form a helical membrane-spanning segment; sequence VLAYVMTTSVAGATEIVYLLNKG. Over 134–152 the chain is Extracellular; sequence DKIVTWSEMCSSYPHYCSK. A helical membrane pass occupies residues 153 to 173; that stretch reads LTIALGLHVFVLFFFLFLSVI. Topologically, residues 174 to 194 are cytoplasmic; it reads SAYRAFSPFDPPCDSQTNNDA.

This sequence belongs to the Casparian strip membrane proteins (CASP) family. Homodimer and heterodimers.

The protein resides in the cell membrane. The polypeptide is CASP-like protein 2D1 (Arabidopsis thaliana (Mouse-ear cress)).